The sequence spans 361 residues: Allatostatin-A receptor (361 aa).

Over 1 to 46 (MESTEDEFYTICLNLTAEDPSFGNCNYTTDFENGELLEKVVSRVVP) the chain is Extracellular. Residues N14 and N26 are each glycosylated (N-linked (GlcNAc...) asparagine). Residues 47 to 67 (IFFGFIGIVGLVGNALVVLVV) form a helical membrane-spanning segment. Topologically, residues 68–78 (AANPGMRSTTN) are cytoplasmic. Residues 79 to 99 (LLIINLAVADLLFVIFCVPFT) form a helical membrane-spanning segment. Over 100–116 (ATDYVMPRWPFGDWWCK) the chain is Extracellular. Residues C115 and C196 are joined by a disulfide bond. A helical membrane pass occupies residues 117-137 (VVQYFIVVTAHASVYTLVLMS). The Cytoplasmic segment spans residues 138 to 158 (LDRFMAVVHPIASMSIRTEKN). The helical transmembrane segment at 159–179 (ALLAIACIWVVILTTAIPVGI) threads the bilayer. Residues 180–212 (CHGEREYSYFNRNHSSCVFLEERGYSKLGFQMS) are Extracellular-facing. An N-linked (GlcNAc...) asparagine glycan is attached at N192. Residues 213-233 (FFLSSYVIPLALISVLYMCML) traverse the membrane as a helical segment. Residues 234–259 (TRLWKSAPGGRVSAESRRGRKKVTRM) are Cytoplasmic-facing. A helical transmembrane segment spans residues 260 to 280 (VVVVVVVFAVCWCPIQIILLV). The Extracellular segment spans residues 281 to 296 (KALNKYHITYFTVTAQ). Residues 297 to 317 (IVSHVLAYMNSCVNPVLYAFL) form a helical membrane-spanning segment. Over 318 to 361 (SENFRVAFRKVMYCPPPYNDGFSGRPQATKTTRTGNGNSCHDIV) the chain is Cytoplasmic. Residues 341 to 361 (GRPQATKTTRTGNGNSCHDIV) are disordered. The segment covering 343-361 (PQATKTTRTGNGNSCHDIV) has biased composition (polar residues).

The protein belongs to the G-protein coupled receptor 1 family. In terms of tissue distribution, expressed in the midgut and, to a lesser extent, in the fore- and hindgut of fifth instar larvae. Also highly expressed in the brain of fourth and fifth instar larvae.

It localises to the cell membrane. Functionally, acts as a receptor for A-type allatostatin neuropeptide hormones. In Bombyx mori (Silk moth), this protein is Allatostatin-A receptor.